Consider the following 668-residue polypeptide: Fructose-1,6-bisphosphatase class 3 (668 aa).

It belongs to the FBPase class 3 family. Mn(2+) serves as cofactor.

It catalyses the reaction beta-D-fructose 1,6-bisphosphate + H2O = beta-D-fructose 6-phosphate + phosphate. Its pathway is carbohydrate biosynthesis; gluconeogenesis. The sequence is that of Fructose-1,6-bisphosphatase class 3 from Clostridium botulinum (strain Langeland / NCTC 10281 / Type F).